The following is an 85-amino-acid chain: uncharacterized protein (85 aa).

A signal peptide spans 1–20; sequence MIKLFCVLAAFISINSACQS.

This is an uncharacterized protein from Invertebrate iridescent virus 6 (IIV-6).